We begin with the raw amino-acid sequence, 370 residues long: MATPNNLTPTNCSWWPISALESDAAKPVETPDAPEASSPAHWPKESLVLYHWTQSFSSQKRLQVRLVIAEKGLACEERDVSLPQSEHKEPWFMRLNLGEEVPVIIHRDNIISDYDQIIDYVERTFTGEHVVALMPEAGSPQHARVLQYRELLDALPMDAYTHGCILHPELTTDSMIPKYATAEIRRHLANATTDLMKLDHEEEPQLSEPYLSKQKKLMAKILEHDDVSYLKKILGELAMVLDQIEAELEKRKLENEGQTCELWLCGCAFTLADVLLGATLHRLKFLGLSKKYWEDGSRPNLQSFFERVQRRFAFRKVLGDIHTTLLSAVIPNAFRLVKRKPPSFFGASFLMGSLGGMGYFAYWYLKKKYI.

The region spanning 45–129 (ESLVLYHWTQ…YVERTFTGEH (85 aa)) is the GST N-terminal domain. In terms of domain architecture, GST C-terminal spans 177–344 (PKYATAEIRR…RLVKRKPPSF (168 aa)).

The protein belongs to the GST superfamily.

The polypeptide is Ganglioside-induced differentiation-associated protein 1-like 1 (Gdap1l1) (Mus musculus (Mouse)).